Reading from the N-terminus, the 256-residue chain is Hemin import ATP-binding protein HmuV (256 aa).

One can recognise an ABC transporter domain in the interval 2 to 238 (ISAQNLVYSL…QELTMLYGAD (237 aa)). Residue 34–41 (GPNGAGKS) coordinates ATP.

Belongs to the ABC transporter superfamily. Heme (hemin) importer (TC 3.A.1.14.5) family. As to quaternary structure, the complex is composed of two ATP-binding proteins (HmuV), two transmembrane proteins (HmuU) and a solute-binding protein (HmuT).

The protein localises to the cell inner membrane. Functionally, part of the ABC transporter complex HmuTUV involved in hemin import. Responsible for energy coupling to the transport system. In Shigella dysenteriae, this protein is Hemin import ATP-binding protein HmuV.